A 207-amino-acid chain; its full sequence is Large ribosomal subunit protein uL4 (207 aa).

Residues 43 to 52 (NKRQGTQSAK) are compositionally biased toward polar residues. The segment at 43 to 72 (NKRQGTQSAKTRAEVRGGGRKPWKQKGTGR) is disordered. The span at 60 to 71 (GGRKPWKQKGTG) shows a compositional bias: basic residues.

The protein belongs to the universal ribosomal protein uL4 family. As to quaternary structure, part of the 50S ribosomal subunit.

Its function is as follows. One of the primary rRNA binding proteins, this protein initially binds near the 5'-end of the 23S rRNA. It is important during the early stages of 50S assembly. It makes multiple contacts with different domains of the 23S rRNA in the assembled 50S subunit and ribosome. In terms of biological role, forms part of the polypeptide exit tunnel. This chain is Large ribosomal subunit protein uL4, found in Alkaliphilus metalliredigens (strain QYMF).